The sequence spans 444 residues: Ribosomal protein uS12 methylthiotransferase RimO (444 aa).

Residues Pro-2–Glu-118 form the MTTase N-terminal domain. Residues Cys-11, Cys-47, Cys-81, Cys-156, Cys-160, and Cys-163 each contribute to the [4Fe-4S] cluster site. The Radical SAM core domain occupies Ser-142–Ser-372. Residues Gln-375–Gln-444 enclose the TRAM domain.

This sequence belongs to the methylthiotransferase family. RimO subfamily. [4Fe-4S] cluster serves as cofactor.

It localises to the cytoplasm. It carries out the reaction L-aspartate(89)-[ribosomal protein uS12]-hydrogen + (sulfur carrier)-SH + AH2 + 2 S-adenosyl-L-methionine = 3-methylsulfanyl-L-aspartate(89)-[ribosomal protein uS12]-hydrogen + (sulfur carrier)-H + 5'-deoxyadenosine + L-methionine + A + S-adenosyl-L-homocysteine + 2 H(+). In terms of biological role, catalyzes the methylthiolation of an aspartic acid residue of ribosomal protein uS12. This chain is Ribosomal protein uS12 methylthiotransferase RimO, found in Desulforamulus reducens (strain ATCC BAA-1160 / DSM 100696 / MI-1) (Desulfotomaculum reducens).